The primary structure comprises 344 residues: MATFVSNWSTKSVSESFIAPLQKRAEKDVPVGNDVPIIDLQQHHHLLVQQITKACQDFGLFQVINHGFPEELMLETMEVCKEFFALPAEEKEKFKPKGEAAKFELPLEQKAKLYVEGEQLSNEEFLYWKDTLAHGCHPLDQDLVNSWPEKPAKYREVVAKYSVEVRKLTMRMLDYICEGLGLKLGYFDNELSQIQMMLTNYYPPCPDPSSTLGSGGHYDGNLITLLQQDLPGLQQLIVKDATWIAVQPIPTAFVVNLGLTLKVITNEKFEGSIHRVVTDPTRDRVSIATLIGPDYSCTIEPAKELLNQDNPPLYKPYSYSEFADIYLSDKSDYDSGVKPYKINV.

The Fe2OG dioxygenase domain occupies 193 to 293 (QIQMMLTNYY…RVSIATLIGP (101 aa)). Fe cation is bound by residues H217, D219, and H274. R284 lines the 2-oxoglutarate pocket.

The protein belongs to the iron/ascorbate-dependent oxidoreductase family. Monomer. Fe(2+) is required as a cofactor. L-ascorbate serves as cofactor. The N-terminus is blocked. In terms of tissue distribution, root.

It catalyses the reaction L-hyoscyamine + 2-oxoglutarate + O2 = (6S)-6-hydroxyhyoscyamine + succinate + CO2. It functions in the pathway alkaloid biosynthesis; scopolamine biosynthesis. In Hyoscyamus niger (Black henbane), this protein is Hyoscyamine 6-dioxygenase (H6H).